Here is a 396-residue protein sequence, read N- to C-terminus: Cell adhesion molecule 3 (396 aa).

Residues 1-22 (MGAPSALPLLLLLACSWAPGGA) form the signal peptide. An Ig-like V-type domain is found at 23 to 124 (NLSQDDSQPW…VRTAKSLVTV (102 aa)). At 23-328 (NLSQDDSQPW…PVPSSSSTYH (306 aa)) the chain is on the extracellular side. 3 disulfide bridges follow: Cys-48–Cys-108, Cys-150–Cys-207, and Cys-252–Cys-297. Ig-like C2-type domains follow at residues 128–226 (PQKP…QRIE) and 231–313 (PTAM…FTLN). Asn-288 is a glycosylation site (N-linked (GlcNAc...) asparagine). Residues 329–349 (AIIGGIVAFIVFLLLILLIFL) traverse the membrane as a helical segment. Over 350–396 (GHYLIRHKGTYLTHEAKGSDDAPDADTAIINAEGGQSGGDDKKEYFI) the chain is Cytoplasmic. The disordered stretch occupies residues 365 to 396 (AKGSDDAPDADTAIINAEGGQSGGDDKKEYFI). Phosphoserine is present on Ser-386.

This sequence belongs to the nectin family. In terms of assembly, homodimer. Can form trans-heterodimers with NECTIN3. Interacts with EPB41L1, DLG3, PALS2 and CASK.

Its subcellular location is the cell membrane. The protein resides in the cell junction. Its function is as follows. Involved in cell-cell adhesion. Has both calcium-independent homophilic cell-cell adhesion activity and calcium-independent heterophilic cell-cell adhesion activity with IGSF4, NECTIN1 and NECTIN3. Interaction with EPB41L1 may regulate structure or function of cell-cell junctions. This Rattus norvegicus (Rat) protein is Cell adhesion molecule 3 (Cadm3).